Consider the following 146-residue polypeptide: uncharacterized protein (146 aa).

The N-terminal stretch at 1-24 (MVIYYGKKNCTLLLLLFILCNIYS) is a signal peptide. N-linked (GlcNAc...) asparagine glycans are attached at residues N99 and N106.

This is an uncharacterized protein from Saccharomyces cerevisiae (strain ATCC 204508 / S288c) (Baker's yeast).